A 177-amino-acid polypeptide reads, in one-letter code: Peptidyl-tRNA hydrolase (177 aa).

Tyrosine 12 is a tRNA binding site. Residue histidine 17 is the Proton acceptor of the active site. Residues phenylalanine 63, asparagine 65, and asparagine 111 each coordinate tRNA.

The protein belongs to the PTH family. Monomer.

It is found in the cytoplasm. The catalysed reaction is an N-acyl-L-alpha-aminoacyl-tRNA + H2O = an N-acyl-L-amino acid + a tRNA + H(+). Hydrolyzes ribosome-free peptidyl-tRNAs (with 1 or more amino acids incorporated), which drop off the ribosome during protein synthesis, or as a result of ribosome stalling. In terms of biological role, catalyzes the release of premature peptidyl moieties from peptidyl-tRNA molecules trapped in stalled 50S ribosomal subunits, and thus maintains levels of free tRNAs and 50S ribosomes. The polypeptide is Peptidyl-tRNA hydrolase (Buchnera aphidicola subsp. Acyrthosiphon pisum (strain 5A)).